The sequence spans 398 residues: Carbamoyl phosphate synthase small chain (398 aa).

A CPSase region spans residues Met-1–Glu-199. L-glutamine-binding residues include Ser-54, Gly-251, and Gly-253. Positions His-203–Glu-391 constitute a Glutamine amidotransferase type-1 domain. The active-site Nucleophile is the Cys-280. 5 residues coordinate L-glutamine: Leu-281, Gln-284, Asn-322, Gly-324, and Phe-325. Residues His-364 and Glu-366 contribute to the active site.

This sequence belongs to the CarA family. In terms of assembly, composed of two chains; the small (or glutamine) chain promotes the hydrolysis of glutamine to ammonia, which is used by the large (or ammonia) chain to synthesize carbamoyl phosphate. Tetramer of heterodimers (alpha,beta)4.

The enzyme catalyses hydrogencarbonate + L-glutamine + 2 ATP + H2O = carbamoyl phosphate + L-glutamate + 2 ADP + phosphate + 2 H(+). It catalyses the reaction L-glutamine + H2O = L-glutamate + NH4(+). The protein operates within amino-acid biosynthesis; L-arginine biosynthesis; carbamoyl phosphate from bicarbonate: step 1/1. It functions in the pathway pyrimidine metabolism; UMP biosynthesis via de novo pathway; (S)-dihydroorotate from bicarbonate: step 1/3. Its function is as follows. Small subunit of the glutamine-dependent carbamoyl phosphate synthetase (CPSase). CPSase catalyzes the formation of carbamoyl phosphate from the ammonia moiety of glutamine, carbonate, and phosphate donated by ATP, constituting the first step of 2 biosynthetic pathways, one leading to arginine and/or urea and the other to pyrimidine nucleotides. The small subunit (glutamine amidotransferase) binds and cleaves glutamine to supply the large subunit with the substrate ammonia. This is Carbamoyl phosphate synthase small chain from Mesorhizobium japonicum (strain LMG 29417 / CECT 9101 / MAFF 303099) (Mesorhizobium loti (strain MAFF 303099)).